A 328-amino-acid chain; its full sequence is Serine protease 48 (328 aa).

The signal sequence occupies residues 1–20; sequence MGPAGCAFTLLLLLGISVCG. One can recognise a Peptidase S1 domain in the interval 28–267; the sequence is VVGGQDAAAG…YQKWINATIS (240 aa). The cysteines at positions 53 and 69 are disulfide-linked. Catalysis depends on charge relay system residues His-68 and Asp-114. 3 disulfides stabilise this stretch: Cys-148–Cys-226, Cys-181–Cys-205, and Cys-216–Cys-244. The Charge relay system role is filled by Ser-220. Asn-263 carries N-linked (GlcNAc...) asparagine glycosylation.

Belongs to the peptidase S1 family.

It is found in the secreted. The chain is Serine protease 48 (PRSS48) from Homo sapiens (Human).